The chain runs to 481 residues: Serine/threonine-protein kinase US3 (481 aa).

Residues Arg12–Glu63 are disordered. Residues Pro47 to Pro61 show a composition bias toward pro residues. One can recognise a Protein kinase domain in the interval Phe191 to Phe478. ATP is bound by residues Leu197 to Val205 and Lys220. Catalysis depends on Asp305, which acts as the Proton acceptor.

This sequence belongs to the protein kinase superfamily. Ser/Thr protein kinase family. In terms of assembly, interacts with host LAT; this interaction prevents LAT activation of TRAF6. Phosphorylated by UL13; this phosphorylation regulates subsequent phosphorylation of UL31 and UL34 by US3. Autophosphorylated.

The protein resides in the host cytoplasm. It localises to the host nucleus. The enzyme catalyses L-seryl-[protein] + ATP = O-phospho-L-seryl-[protein] + ADP + H(+). The catalysed reaction is L-threonyl-[protein] + ATP = O-phospho-L-threonyl-[protein] + ADP + H(+). Multifunctional serine/threonine kinase that plays a role in several processes including egress of virus particles from the nucleus, modulation of the actin cytoskeleton and inhibition of host immune response. Phosphorylates UL31 and UL34, two critical regulators of capsid budding from nucleus to endoplasmic reticulum, thereby facilitating virion egress. Modulates and redistributes host components of the nuclear envelope, including LMNA, emerin/EMD and the nuclear matrix protein MATR3. In turn, facilitates nuclear pore impairment and capsid release through impaired nuclear envelope. Phosphorylates envelope glycoprotein B (gB), probably to direct it to the cell surface. Promotes virus intracellular spread by restructuring host cell cytoskeleton. Blocks host apoptosis to extend cell survival and allow efficient viral replication. Promotes viral gene expression by phosphorylating host HDAC2 to reduce viral genome silencing. Strongly inhibits TCR-activated signal transduction in T-cells by reducing the ubiquitination of LAT and TRAF6, leading to a suboptimal activation of LAT. Subverts host antiviral innate immunity by inhibiting type I interferon production through hyperphosphorylation of beta-catenin/CTNNB1. In addition, phosphorylates the RNA sensor RIGI and the transcription factor IRF3 to prevent the RLR-mediated antiviral signaling pathway. Hyperphosphorylates host RELA and thereby dampens NF-kappa-B signaling. Acts as an immunoevasin partly responsible for inhibition of MR1 expression and antigen presentation in response to bacterial infection. The chain is Serine/threonine-protein kinase US3 (US3) from Human herpesvirus 2 (strain HG52) (HHV-2).